Reading from the N-terminus, the 244-residue chain is MRKQYWFIILTYIIMQFSALIAIPLLFKFGYAGGQPTDENMLHAQGLWSVISFIACLVVVLLILRTVPKETLRNGQKDSIGLSILWAIAGFFIALFSQGIAGSIEYYVFGIGRESENTQAILDVIQAVPLMIIVSSIVGPILEEIIFRKIIFGALYEKTNFFFAGLISSVIFGIVHADLKHLLLYTAMGFTFAFLYARTKRIWVPIFAHLMMNTFVVIMQLEPVRNYLEQQSTQMQLIIGGLFL.

Transmembrane regions (helical) follow at residues 7 to 27, 44 to 64, 80 to 100, 127 to 147, 159 to 179, and 202 to 222; these read FIIL…PLLF, AQGL…LLIL, IGLS…SQGI, AVPL…EIIF, TNFF…HADL, and IWVP…MQLE. Residues E143 and H176 each act as proton donor/acceptor in the active site.

It belongs to the peptidase U48 family.

The protein resides in the cell membrane. Its function is as follows. May function as endopeptidase which proteolytically removes the C-terminal three residues of farnesylated peptides containing the CAAX motif where C is cysteine, A is an aliphatic amino acid and X is any amino acid. This is Putative membrane peptidase YdiL (ydiL) from Bacillus subtilis (strain 168).